Consider the following 656-residue polypeptide: DNA ligase (656 aa).

Residues 32 to 36 and 81 to 82 contribute to the NAD(+) site; these read DAVYD and SL. Lys-112 functions as the N6-AMP-lysine intermediate in the catalytic mechanism. 3 residues coordinate NAD(+): Arg-133, Glu-167, and Lys-306. Positions 400, 403, 416, and 421 each coordinate Zn(2+). Positions 577–656 constitute a BRCT domain; that stretch reads ESSSVFSNKT…ELLKRLKEFD (80 aa).

Belongs to the NAD-dependent DNA ligase family. LigA subfamily. It depends on Mg(2+) as a cofactor. Mn(2+) is required as a cofactor.

It carries out the reaction NAD(+) + (deoxyribonucleotide)n-3'-hydroxyl + 5'-phospho-(deoxyribonucleotide)m = (deoxyribonucleotide)n+m + AMP + beta-nicotinamide D-nucleotide.. In terms of biological role, DNA ligase that catalyzes the formation of phosphodiester linkages between 5'-phosphoryl and 3'-hydroxyl groups in double-stranded DNA using NAD as a coenzyme and as the energy source for the reaction. It is essential for DNA replication and repair of damaged DNA. This chain is DNA ligase, found in Helicobacter pylori (strain Shi470).